A 134-amino-acid chain; its full sequence is MALKIRLARAGSKKRPYYHVVVADVRAPRDGRFIETVGSWNPVLLKDAERVKLDAERIQHWIAQGAQPTDRVLRFLDQAGIAKRPSRNNPTKGEPGKKAQERLALAKQAEEEAAAKAAEAAAAAAAPAEEAASE.

The interval 79–134 is disordered; that stretch reads AGIAKRPSRNNPTKGEPGKKAQERLALAKQAEEEAAAKAAEAAAAAAAPAEEAASE. The span at 115-134 shows a compositional bias: low complexity; the sequence is AKAAEAAAAAAAPAEEAASE.

This sequence belongs to the bacterial ribosomal protein bS16 family.

This chain is Small ribosomal subunit protein bS16, found in Brucella suis (strain ATCC 23445 / NCTC 10510).